The sequence spans 160 residues: SsrA-binding protein (160 aa).

It belongs to the SmpB family.

The protein resides in the cytoplasm. Its function is as follows. Required for rescue of stalled ribosomes mediated by trans-translation. Binds to transfer-messenger RNA (tmRNA), required for stable association of tmRNA with ribosomes. tmRNA and SmpB together mimic tRNA shape, replacing the anticodon stem-loop with SmpB. tmRNA is encoded by the ssrA gene; the 2 termini fold to resemble tRNA(Ala) and it encodes a 'tag peptide', a short internal open reading frame. During trans-translation Ala-aminoacylated tmRNA acts like a tRNA, entering the A-site of stalled ribosomes, displacing the stalled mRNA. The ribosome then switches to translate the ORF on the tmRNA; the nascent peptide is terminated with the 'tag peptide' encoded by the tmRNA and targeted for degradation. The ribosome is freed to recommence translation, which seems to be the essential function of trans-translation. The chain is SsrA-binding protein from Pectobacterium atrosepticum (strain SCRI 1043 / ATCC BAA-672) (Erwinia carotovora subsp. atroseptica).